A 433-amino-acid chain; its full sequence is PC-esterase domain-containing protein 1B (433 aa).

Residues 386-433 (PPCHQRQAPVVHRGFPRHFARGPYSNPWRDRPRRPPKHSPAGLESRPQ) are disordered.

This sequence belongs to the PC-esterase family.

This chain is PC-esterase domain-containing protein 1B (Pced1b), found in Mus musculus (Mouse).